We begin with the raw amino-acid sequence, 67 residues long: Large ribosomal subunit protein uL29 (67 aa).

This sequence belongs to the universal ribosomal protein uL29 family.

The protein is Large ribosomal subunit protein uL29 of Sulfurihydrogenibium sp. (strain YO3AOP1).